The chain runs to 735 residues: E3 UFM1-protein ligase 1 homolog (735 aa).

The segment at 389 to 445 is disordered; sequence RLEAEKKKQGGAKAAVKVQEETDDWGDGKKGGKGGKKNAKSVKGGSKSSAPSTSSNL. The segment covering 419–428 has biased composition (basic residues); that stretch reads GGKGGKKNAK. Positions 429 to 445 are enriched in low complexity; sequence SVKGGSKSSAPSTSSNL.

This sequence belongs to the UFL1 family.

E3 UFM1-protein ligase that mediates ufmylation of target proteins. In Caenorhabditis elegans, this protein is E3 UFM1-protein ligase 1 homolog (ufl-1).